The following is a 1132-amino-acid chain: Protein CROWDED NUCLEI 1 (1132 aa).

Positions 1-31 (MSTPLKVWQRWSTPTKATNPDSNGSSHGTGL) are disordered. Positions 10-28 (RWSTPTKATNPDSNGSSHG) are enriched in polar residues. Residues 73–714 (LLIEKKEWSS…KKLKEQREQF (642 aa)) are a coiled coil. 2 short sequence motifs (nuclear localization signal) span residues 379–386 (EKREAEWK) and 693–700 (IRKDVDDL). Residues Ser-774 and Ser-803 each carry the phosphoserine modification. Over residues 849–859 (AESETGTKEVE) the composition is skewed to basic and acidic residues. Disordered regions lie at residues 849-871 (AESE…DQSD), 883-909 (SLSN…TRSV), 924-1039 (INLY…VQQE), and 1061-1132 (GVST…FLTT). The segment covering 861 to 871 (TNVNSDGDQSD) has biased composition (polar residues). Ser-865 and Ser-883 each carry phosphoserine. Residues 895–907 (MKGKGKARTRRTR) are compositionally biased toward basic residues. The residue at position 908 (Ser-908) is a Phosphoserine. Residues Ser-1093, Ser-1105, and Ser-1112 each carry the phosphoserine modification. Positions 1095–1105 (DVNKTPLRADS) are enriched in basic and acidic residues.

This sequence belongs to the CRWN family. Core component of the LINC complex which is composed of inner nuclear membrane SUN domain-containing proteins coupled to outer nuclear membrane WIP and WIT proteins. The LINC complex also involves nucleoskeletal proteins CRWN/LINC and possibly KAKU4 and the cytoskeletal myosin KAKU1. Interacts with SUN1 and SUN2. Binds to KAKU4. As to expression, expressed at low levels in roots, leaves, flowers and flower stalks.

The protein localises to the nucleus membrane. It localises to the nucleus. Its subcellular location is the nucleoplasm. It is found in the nucleus lamina. In terms of biological role, component of SUN-protein-containing multivariate complexes also called LINC complexes which link the nucleoskeleton and cytoskeleton by providing versatile outer nuclear membrane attachment sites for cytoskeletal filaments. Required for nucleus structure organization (e.g. size and shape). In Arabidopsis thaliana (Mouse-ear cress), this protein is Protein CROWDED NUCLEI 1.